Here is a 396-residue protein sequence, read N- to C-terminus: Tryptophan synthase beta chain (396 aa).

Lysine 86 carries the N6-(pyridoxal phosphate)lysine modification.

Belongs to the TrpB family. Tetramer of two alpha and two beta chains. Pyridoxal 5'-phosphate serves as cofactor.

It catalyses the reaction (1S,2R)-1-C-(indol-3-yl)glycerol 3-phosphate + L-serine = D-glyceraldehyde 3-phosphate + L-tryptophan + H2O. Its pathway is amino-acid biosynthesis; L-tryptophan biosynthesis; L-tryptophan from chorismate: step 5/5. Its function is as follows. The beta subunit is responsible for the synthesis of L-tryptophan from indole and L-serine. This is Tryptophan synthase beta chain from Francisella tularensis subsp. tularensis (strain FSC 198).